A 465-amino-acid chain; its full sequence is Paired box protein Pax-8 (465 aa).

The segment at residues 26 to 152 is a DNA-binding region (paired); it reads GHGGLNQLGG…SSINRIIRTK (127 aa). Positions 29 to 85 are PAI subdomain; sequence GLNQLGGAFVNGRPLPEVVRQRIVDLAHQGVRPCDISRQLRVSHGCVSKILGRYYET. Positions 104-152 are RED subdomain; sequence KVVEKIGDYKRQNPTMFAWEIRDRLLTDGVCDNDTVPSVSSINRIIRTK. Positions 206–227 are disordered; that stretch reads PSADGKRKLDDSDQESCRLSID.

Expression starts at late gastrula stages in cells fated to become the primordia of the otic system and the pronephric kidney. Expression is maintained in these two structures through late tailbud stages. Does not appear to be expressed in the thyroid gland.

Its subcellular location is the nucleus. Its function is as follows. Probable transcription factor. Involved in kidney development, acting synergistically with lhx1/lim-1 to establish the pronephric primordium in late gastrulae/early neurulae. The sequence is that of Paired box protein Pax-8 from Xenopus laevis (African clawed frog).